The primary structure comprises 180 residues: MGLTISSLFSRLFGKKQMRILMVGLDAAGKTTILYKLKLGEIVTTIPTIGFNVETVEYKNICFTVWDVGGQDKIRPLWRHYFQNTQGLIFVVDSNDRERIQEAAEELQKMLQEDELRDAVLLVFANKQDLPNAMAISEMTDKLTLQTLRNRTWYVQATCATQGTGLYEGLDWLSNELSKR.

A lipid anchor (N-myristoyl glycine) is attached at G2. GTP is bound by residues 24–31 (GLDAAGKT), 67–71 (DVGGQ), and 126–129 (NKQD).

Belongs to the small GTPase superfamily. Arf family.

Its subcellular location is the golgi apparatus. Its function is as follows. GTP-binding protein involved in protein trafficking; may modulate vesicle budding and uncoating within the Golgi apparatus. May be involved in ciliogenesis. This is ADP-ribosylation factor 4 (arf4) from Xenopus laevis (African clawed frog).